Consider the following 392-residue polypeptide: Branched-chain-amino-acid aminotransferase, mitochondrial (392 aa).

Residues 1–27 constitute a mitochondrion transit peptide; the sequence is MAAAALGQIWARKFLSVPWLLCGPRRY. Tyr168 contributes to the substrate binding site. At Lys229 the chain carries N6-(pyridoxal phosphate)lysine. N6-acetyllysine is present on Lys321.

The protein belongs to the class-IV pyridoxal-phosphate-dependent aminotransferase family. Homodimer. Pyridoxal 5'-phosphate serves as cofactor.

The protein resides in the mitochondrion. The catalysed reaction is L-leucine + 2-oxoglutarate = 4-methyl-2-oxopentanoate + L-glutamate. The enzyme catalyses L-isoleucine + 2-oxoglutarate = (S)-3-methyl-2-oxopentanoate + L-glutamate. It carries out the reaction L-valine + 2-oxoglutarate = 3-methyl-2-oxobutanoate + L-glutamate. In terms of biological role, catalyzes the first reaction in the catabolism of the essential branched chain amino acids leucine, isoleucine, and valine. May also function as a transporter of branched chain alpha-keto acids. This is Branched-chain-amino-acid aminotransferase, mitochondrial (BCAT2) from Pongo abelii (Sumatran orangutan).